The following is a 622-amino-acid chain: Probable potassium transport system protein Kup 2 (622 aa).

Transmembrane regions (helical) follow at residues 9–29, 46–66, 99–119, 137–157, 169–189, 213–233, 247–267, 285–305, 337–357, 363–383, 396–416, and 419–439; these read LSGV…TSPL, PASI…VVSV, TPLL…EVVI, PSLD…LFAI, FAPI…NSIF, ASFF…ALYA, WFMV…ALLL, ALLP…QAVI, IYIP…IMSF, LAAA…ILSC, LVAA…AANL, and IFSG…VMTS.

Belongs to the HAK/KUP transporter (TC 2.A.72) family.

Its subcellular location is the cell inner membrane. It catalyses the reaction K(+)(in) + H(+)(in) = K(+)(out) + H(+)(out). Its function is as follows. Transport of potassium into the cell. Likely operates as a K(+):H(+) symporter. The chain is Probable potassium transport system protein Kup 2 from Aeromonas hydrophila subsp. hydrophila (strain ATCC 7966 / DSM 30187 / BCRC 13018 / CCUG 14551 / JCM 1027 / KCTC 2358 / NCIMB 9240 / NCTC 8049).